The chain runs to 752 residues: Probable cell surface ferric reductase kap2 (752 aa).

Residues 40–60 (GKYGLGWVYFSVILLAISTII) traverse the membrane as a helical segment. N-linked (GlcNAc...) asparagine glycans are attached at residues Asn-118 and Asn-133. 2 helical membrane passes run 157–177 (IGFP…FVTL) and 195–215 (PPLA…IIAL). Residues 201 to 348 (AGMIAVAMIP…WATVAIWMLS (148 aa)) enclose the Ferric oxidoreductase domain. The heme site is built by His-237 and His-251. 3 helical membrane passes run 241–261 (GYLC…TPIW), 281–301 (GTGW…LPIL), and 306–326 (YELF…MIFW). 2 residues coordinate heme: His-313 and His-327. A helical membrane pass occupies residues 331-351 (FLASWDYLWATVAIWMLSYAV). One can recognise an FAD-binding FR-type domain in the interval 349–475 (YAVRLFYVNW…EGPYGGMKRD (127 aa)). Asn-357 carries an N-linked (GlcNAc...) asparagine glycan. Position 467-470 (467-470 (GPYG)) interacts with NADP(+). Residues 482-502 (VVFFAGGSGITATASHLLNLI) traverse the membrane as a helical segment. Residue Asn-627 is glycosylated (N-linked (GlcNAc...) asparagine). 714-715 (CG) lines the NADP(+) pocket.

It belongs to the ferric reductase (FRE) family. Requires FAD as cofactor. The cofactor is heme.

It localises to the cell membrane. It catalyses the reaction 2 a Fe(II)-siderophore + NADP(+) + H(+) = 2 a Fe(III)-siderophore + NADPH. Its function is as follows. Probable cell surface ferric reductase that acts as a negative regulatory factor of growth and development. Involved in kojic acid production through the regulation of kojA expression. The protein is Probable cell surface ferric reductase kap2 of Aspergillus oryzae (strain ATCC 42149 / RIB 40) (Yellow koji mold).